The chain runs to 447 residues: Nacrein (447 aa).

Residues 1–17 (MYLHLTALCVVIPLCYG) form the signal peptide. A glycan (N-linked (GlcNAc...) asparagine) is linked at Asn44. The Alpha-carbonic anhydrase domain occupies 50-446 (AGFSYDRSIC…KNKVTVYKSF (397 aa)). Residues His149, His151, and His174 each coordinate Zn(2+). The disordered stretch occupies residues 218–329 (DEPDDEECKH…GENGHKHGCR (112 aa)). Basic and acidic residues predominate over residues 224 to 236 (ECKHILKGHHPDN). Positions 237-321 (NENGNGDNGN…NNGENGNNGE (85 aa)) are enriched in low complexity. 27 tandem repeats follow at residues 242–244 (GDN), 245–247 (GNN), 248–250 (GYN), 251–253 (GDN), 254–256 (GNN), 257–259 (GDN), 260–262 (GNN), 263–265 (SYN), 266–268 (GDN), 269–271 (GNN), 272–274 (GVN), 275–277 (GNN), 278–280 (GYN), 281–283 (GDN), 284–286 (GNN), 287–289 (GDN), 290–292 (GNN), 293–295 (GYN), 296–298 (GDN), 299–301 (GNN), 302–304 (GDN), 305–307 (GNN), 308–310 (GEN), 311–313 (GNN), 314–316 (GEN), 317–318 (GN), and 320–322 (GEN). Residues 242 to 322 (GDNGNNGYNG…NGENGNNGEN (81 aa)) form a 27 X 3 AA approximate tandem repeats of G-X-N region. An N-linked (GlcNAc...) asparagine glycan is attached at Asn261. Position 387–388 (387–388 (TT)) interacts with substrate.

The protein belongs to the alpha-carbonic anhydrase family. As to quaternary structure, homooligomer; disulfide-linked. May also be disulfide-linked to insoluble organic matrix. The cofactor is Zn(2+). Post-translationally, N-glycosylated. In terms of tissue distribution, expressed at whole regions of the mantle epithelium tissue. Is found in the aragonitic nacreous and calcitic prismatic and foliated layers.

It localises to the secreted. The protein localises to the extracellular space. The protein resides in the extracellular matrix. The catalysed reaction is hydrogencarbonate + H(+) = CO2 + H2O. In terms of biological role, acts as a negative regulator for calcification in the shells of mollusks. May function both as a calcium concentrator and as a carbonic anhydrase required for production of carbonate ions, which are assembled to CaCO(3) at mineralization sites. Is important for shell formation in both the calcitic prismatic layer and the aragonitic nacreous layer. This chain is Nacrein, found in Pinctada fucata (Akoya pearl oyster).